Consider the following 303-residue polypeptide: Uricase (303 aa).

Residues lysine 12 and threonine 60 each act as charge relay system in the active site. Urate contacts are provided by threonine 60, aspartate 61, phenylalanine 162, arginine 179, valine 234, glutamine 235, and asparagine 261. The active-site Charge relay system is the histidine 263. A Microbody targeting signal motif is present at residues 301-303 (TKL).

This sequence belongs to the uricase family.

It localises to the peroxisome. The catalysed reaction is urate + O2 + H2O = 5-hydroxyisourate + H2O2. It functions in the pathway purine metabolism; urate degradation; (S)-allantoin from urate: step 1/3. Its function is as follows. Catalyzes the oxidation of uric acid to 5-hydroxyisourate, which is further processed to form (S)-allantoin. In Cyberlindnera jadinii (Torula yeast), this protein is Uricase.